We begin with the raw amino-acid sequence, 108 residues long: Nucleoid-associated protein BQ02190 (108 aa).

Belongs to the YbaB/EbfC family. Homodimer.

Its subcellular location is the cytoplasm. The protein localises to the nucleoid. Binds to DNA and alters its conformation. May be involved in regulation of gene expression, nucleoid organization and DNA protection. The polypeptide is Nucleoid-associated protein BQ02190 (Bartonella quintana (strain Toulouse) (Rochalimaea quintana)).